Consider the following 304-residue polypeptide: ATP phosphoribosyltransferase (304 aa).

This sequence belongs to the ATP phosphoribosyltransferase family. Long subfamily. Mg(2+) serves as cofactor.

The protein resides in the cytoplasm. It catalyses the reaction 1-(5-phospho-beta-D-ribosyl)-ATP + diphosphate = 5-phospho-alpha-D-ribose 1-diphosphate + ATP. Its pathway is amino-acid biosynthesis; L-histidine biosynthesis; L-histidine from 5-phospho-alpha-D-ribose 1-diphosphate: step 1/9. Feedback inhibited by histidine. Its function is as follows. Catalyzes the condensation of ATP and 5-phosphoribose 1-diphosphate to form N'-(5'-phosphoribosyl)-ATP (PR-ATP). Has a crucial role in the pathway because the rate of histidine biosynthesis seems to be controlled primarily by regulation of HisG enzymatic activity. The chain is ATP phosphoribosyltransferase from Xylella fastidiosa (strain 9a5c).